The chain runs to 355 residues: Peptide chain release factor 1 (355 aa).

An N5-methylglutamine modification is found at Gln231. The span at 280-291 (SERLAKESEARK) shows a compositional bias: basic and acidic residues. The segment at 280 to 303 (SERLAKESEARKSQVGSGDRSERI) is disordered.

Belongs to the prokaryotic/mitochondrial release factor family. Post-translationally, methylated by PrmC. Methylation increases the termination efficiency of RF1.

It localises to the cytoplasm. Its function is as follows. Peptide chain release factor 1 directs the termination of translation in response to the peptide chain termination codons UAG and UAA. The polypeptide is Peptide chain release factor 1 (Campylobacter jejuni subsp. jejuni serotype O:2 (strain ATCC 700819 / NCTC 11168)).